The following is a 62-amino-acid chain: Rubredoxin-2 (62 aa).

In terms of domain architecture, Rubredoxin-like spans 7–58 (MWRCQMVNCGYVYDPDRGDKRRKVPAGTKFEDLPEDWRCPVCGAGKKSFRRL). 4 residues coordinate Fe cation: C10, C15, C45, and C48.

This sequence belongs to the rubredoxin family. Monomer. Fe(3+) serves as cofactor.

Rubredoxin is a small nonheme, iron protein lacking acid-labile sulfide. Its single Fe, chelated to 4 Cys, functions as an electron acceptor and may also stabilize the conformation of the molecule. This Desulfovibrio desulfuricans (strain ATCC 27774 / DSM 6949 / MB) protein is Rubredoxin-2 (rd2).